The chain runs to 405 residues: Macrolide efflux protein A (405 aa).

11 consecutive transmembrane segments (helical) span residues 14–34 (IWAG…AIIF), 48–68 (MASL…GVLV), 76–98 (IMIG…AFYM), 145–165 (SLQS…YSVW), 168–188 (NAII…VAIV), 222–242 (FALL…NALF), 259–279 (ITEI…GLFG), 285–305 (ILLI…SGLL), 310–330 (FFIF…YSGV), 350–370 (LTGS…ALFA), and 373–393 (IGVN…AIVC).

This sequence belongs to the major facilitator superfamily. Drug:H(+) antiporter-3 (DHA3) (TC 2.A.1.21) family.

Its subcellular location is the cell membrane. Confers resistance to 14-membered macrolides including erythromycin and to 15-membered macrolides but not to 16-membered macrolides, lincosamides or analogs of streptogramin B. May function as an efflux pump to regulate intracellular macrolide levels. This Streptococcus pyogenes serotype M6 (strain ATCC BAA-946 / MGAS10394) protein is Macrolide efflux protein A.